A 236-amino-acid polypeptide reads, in one-letter code: Rho-related GTP-binding protein RhoV (236 aa).

The segment at 1-28 (MPPRELSEAEPPPLPASTPPPRRRSAPP) is disordered. Pro residues predominate over residues 10–20 (EPPPLPASTPP). At S25 the chain carries Phosphoserine. GTP contacts are provided by residues 38 to 45 (GDGAVGKS), 85 to 89 (DTAGQ), and 143 to 146 (TQAD). Residue C234 is the site of S-palmitoyl cysteine attachment.

This sequence belongs to the small GTPase superfamily. Rho family. As to quaternary structure, interacts with PAK2. Mg(2+) is required as a cofactor. In terms of tissue distribution, highly expressed in brain and testis and at lower levels in spleen and lung.

It localises to the cell membrane. The protein localises to the endosome membrane. Plays a role in the control of the actin cytoskeleton via activation of the JNK pathway. This is Rho-related GTP-binding protein RhoV from Rattus norvegicus (Rat).